We begin with the raw amino-acid sequence, 215 residues long: Holliday junction branch migration complex subunit RuvA (215 aa).

The segment at 1–67 (MIGWLQGERI…DDGSTLFGFC (67 aa)) is domain I. Residues 68–146 (DQQERDLFRT…NWAPLQEPSL (79 aa)) form a domain II region. The interval 147-158 (SLVDRSDVKAIP) is flexible linker. Residues 159-215 (LGEPCLRDLQITLETLGYEDLEIRRAMRAVASGPDVPAEDDGDAWLRASLKWLSQSA) form a domain III region.

This sequence belongs to the RuvA family. Homotetramer. Forms an RuvA(8)-RuvB(12)-Holliday junction (HJ) complex. HJ DNA is sandwiched between 2 RuvA tetramers; dsDNA enters through RuvA and exits via RuvB. An RuvB hexamer assembles on each DNA strand where it exits the tetramer. Each RuvB hexamer is contacted by two RuvA subunits (via domain III) on 2 adjacent RuvB subunits; this complex drives branch migration. In the full resolvosome a probable DNA-RuvA(4)-RuvB(12)-RuvC(2) complex forms which resolves the HJ.

It localises to the cytoplasm. Its function is as follows. The RuvA-RuvB-RuvC complex processes Holliday junction (HJ) DNA during genetic recombination and DNA repair, while the RuvA-RuvB complex plays an important role in the rescue of blocked DNA replication forks via replication fork reversal (RFR). RuvA specifically binds to HJ cruciform DNA, conferring on it an open structure. The RuvB hexamer acts as an ATP-dependent pump, pulling dsDNA into and through the RuvAB complex. HJ branch migration allows RuvC to scan DNA until it finds its consensus sequence, where it cleaves and resolves the cruciform DNA. The protein is Holliday junction branch migration complex subunit RuvA of Synechococcus sp. (strain WH7803).